A 369-amino-acid polypeptide reads, in one-letter code: Phenylalanine--tRNA ligase alpha subunit (369 aa).

Mg(2+) is bound at residue Glu269.

It belongs to the class-II aminoacyl-tRNA synthetase family. Phe-tRNA synthetase alpha subunit type 1 subfamily. Tetramer of two alpha and two beta subunits. Mg(2+) serves as cofactor.

It localises to the cytoplasm. The catalysed reaction is tRNA(Phe) + L-phenylalanine + ATP = L-phenylalanyl-tRNA(Phe) + AMP + diphosphate + H(+). The chain is Phenylalanine--tRNA ligase alpha subunit from Nitrobacter winogradskyi (strain ATCC 25391 / DSM 10237 / CIP 104748 / NCIMB 11846 / Nb-255).